A 349-amino-acid polypeptide reads, in one-letter code: UDP-3-O-acylglucosamine N-acyltransferase 1 (349 aa).

The active-site Proton acceptor is the His-241.

The protein belongs to the transferase hexapeptide repeat family. LpxD subfamily. As to quaternary structure, homotrimer.

It carries out the reaction a UDP-3-O-[(3R)-3-hydroxyacyl]-alpha-D-glucosamine + a (3R)-hydroxyacyl-[ACP] = a UDP-2-N,3-O-bis[(3R)-3-hydroxyacyl]-alpha-D-glucosamine + holo-[ACP] + H(+). It functions in the pathway bacterial outer membrane biogenesis; LPS lipid A biosynthesis. Functionally, catalyzes the N-acylation of UDP-3-O-acylglucosamine using 3-hydroxyacyl-ACP as the acyl donor. Is involved in the biosynthesis of lipid A, a phosphorylated glycolipid that anchors the lipopolysaccharide to the outer membrane of the cell. The sequence is that of UDP-3-O-acylglucosamine N-acyltransferase 1 from Gloeobacter violaceus (strain ATCC 29082 / PCC 7421).